A 542-amino-acid chain; its full sequence is Phosphoacetylglucosamine mutase (542 aa).

At Met-1 the chain carries N-acetylmethionine. At Thr-62 the chain carries Phosphothreonine. The active-site Phosphoserine intermediate is Ser-64. The Mg(2+) site is built by Ser-64, Asp-276, Asp-278, and Asp-280. Ser-64 bears the Phosphoserine mark. Substrate-binding positions include 370 to 372 (EAN), 496 to 500 (RPSGT), and Arg-505.

It belongs to the phosphohexose mutase family. Requires Mg(2+) as cofactor. In terms of tissue distribution, found in many tissues except lung. Relatively high expression in pancreas, heart, liver, and placenta, and relatively low expression in brain, skeletal muscle and kidney.

It catalyses the reaction N-acetyl-alpha-D-glucosamine 1-phosphate = N-acetyl-D-glucosamine 6-phosphate. Its pathway is nucleotide-sugar biosynthesis; UDP-N-acetyl-alpha-D-glucosamine biosynthesis; N-acetyl-alpha-D-glucosamine 1-phosphate from alpha-D-glucosamine 6-phosphate (route I): step 2/2. Catalyzes the conversion of GlcNAc-6-P into GlcNAc-1-P during the synthesis of uridine diphosphate/UDP-GlcNAc, a sugar nucleotide critical to multiple glycosylation pathways including protein N- and O-glycosylation. The chain is Phosphoacetylglucosamine mutase from Homo sapiens (Human).